The sequence spans 319 residues: ATP-dependent 6-phosphofructokinase (319 aa).

An ATP-binding site is contributed by Gly-11. An ADP-binding site is contributed by 21–25; it reads RAVVR. Residues 72 to 73 and 102 to 105 contribute to the ATP site; these read RC and GDGS. Asp-103 lines the Mg(2+) pocket. Residue 125–127 participates in substrate binding; it reads TID. Asp-127 serves as the catalytic Proton acceptor. An ADP-binding site is contributed by Arg-154. Residues Arg-162 and 169 to 171 contribute to the substrate site; that span reads MGR. Residues 185 to 187, Arg-211, and 213 to 215 each bind ADP; these read GAE and KKH. Substrate is bound by residues Glu-222, Arg-243, and 249-252; that span reads HVQR.

The protein belongs to the phosphofructokinase type A (PFKA) family. ATP-dependent PFK group I subfamily. Prokaryotic clade 'B1' sub-subfamily. In terms of assembly, homotetramer. Requires Mg(2+) as cofactor.

Its subcellular location is the cytoplasm. It catalyses the reaction beta-D-fructose 6-phosphate + ATP = beta-D-fructose 1,6-bisphosphate + ADP + H(+). The protein operates within carbohydrate degradation; glycolysis; D-glyceraldehyde 3-phosphate and glycerone phosphate from D-glucose: step 3/4. With respect to regulation, allosterically activated by ADP and other diphosphonucleosides, and allosterically inhibited by phosphoenolpyruvate. Catalyzes the phosphorylation of D-fructose 6-phosphate to fructose 1,6-bisphosphate by ATP, the first committing step of glycolysis. In Anoxybacillus flavithermus (strain DSM 21510 / WK1), this protein is ATP-dependent 6-phosphofructokinase.